The primary structure comprises 146 residues: Transcription antitermination protein NusB (146 aa).

It belongs to the NusB family.

Its function is as follows. Involved in transcription antitermination. Required for transcription of ribosomal RNA (rRNA) genes. Binds specifically to the boxA antiterminator sequence of the ribosomal RNA (rrn) operons. This Solibacter usitatus (strain Ellin6076) protein is Transcription antitermination protein NusB.